We begin with the raw amino-acid sequence, 89 residues long: Conotoxin Lt6.4 (89 aa).

An N-terminal signal peptide occupies residues 1–22 (MKLTCVPIVAMLFLMACQLITA). Residues 23 to 50 (DYSREKHGYSAEKSSDKIQDSFYSKLTK) constitute a propeptide that is removed on maturation. Disulfide bonds link Cys-52–Cys-67, Cys-59–Cys-71, and Cys-66–Cys-80.

Belongs to the conotoxin O1 superfamily. Expressed by the venom duct.

Its subcellular location is the secreted. This Conus litteratus (Lettered cone) protein is Conotoxin Lt6.4.